A 92-amino-acid polypeptide reads, in one-letter code: DNA/RNA-binding protein Alba (92 aa).

N6-acetyllysine is present on lysine 11.

It belongs to the histone-like Alba family. Post-translationally, acetylated. Acetylation at Lys-11 decreases DNA-binding affinity.

The protein localises to the cytoplasm. It is found in the chromosome. In terms of biological role, binds double-stranded DNA tightly but without sequence specificity. Involved in DNA compaction. The polypeptide is DNA/RNA-binding protein Alba (Pyrobaculum calidifontis (strain DSM 21063 / JCM 11548 / VA1)).